Consider the following 840-residue polypeptide: Probable inorganic carbon transporter subunit DabA (840 aa).

Cys-355, Asp-357, His-539, and Cys-554 together coordinate Zn(2+).

The protein belongs to the inorganic carbon transporter (TC 9.A.2) DabA family. Forms a complex with DabB. Zn(2+) serves as cofactor.

It localises to the cell membrane. In terms of biological role, part of an energy-coupled inorganic carbon pump. This chain is Probable inorganic carbon transporter subunit DabA, found in Roseiflexus castenholzii (strain DSM 13941 / HLO8).